The chain runs to 940 residues: Lon protease homolog 1, mitochondrial (940 aa).

A mitochondrion-targeting transit peptide spans 1–61; that stretch reads MLKLFTSSAS…AFFCSEPTNG (61 aa). The interval 70-90 is disordered; the sequence is KAVESDSEVSDSKSSSAIVPT. Phosphoserine is present on S74. The Lon N-terminal domain maps to 100–309; that stretch reads VLALPVPHRP…LTLELMKKEM (210 aa). Residue 464-471 participates in ATP binding; that stretch reads GPPGVGKT. In terms of domain architecture, Lon proteolytic spans 751-935; that stretch reads QTPVGVVMGL…GKIFELAFGY (185 aa). Active-site residues include S841 and K884.

This sequence belongs to the peptidase S16 family. Homohexamer or homoheptamer. Organized in a ring with a central cavity.

The protein localises to the mitochondrion matrix. The enzyme catalyses Hydrolysis of proteins in presence of ATP.. In terms of biological role, ATP-dependent serine protease that mediates the selective degradation of misfolded, unassembled or oxidatively damaged polypeptides as well as certain short-lived regulatory proteins in the mitochondrial matrix. May also have a chaperone function in the assembly of inner membrane protein complexes. Participates in the regulation of mitochondrial gene expression and in the maintenance of the integrity of the mitochondrial genome. Binds to mitochondrial DNA in a site-specific manner. This Arabidopsis thaliana (Mouse-ear cress) protein is Lon protease homolog 1, mitochondrial (LON1).